A 407-amino-acid polypeptide reads, in one-letter code: Phosphopentomutase (407 aa).

Residues Asp-10, Asp-306, His-311, Asp-347, His-348, and His-359 each contribute to the Mn(2+) site.

Belongs to the phosphopentomutase family. Mn(2+) is required as a cofactor.

Its subcellular location is the cytoplasm. It carries out the reaction 2-deoxy-alpha-D-ribose 1-phosphate = 2-deoxy-D-ribose 5-phosphate. It catalyses the reaction alpha-D-ribose 1-phosphate = D-ribose 5-phosphate. The protein operates within carbohydrate degradation; 2-deoxy-D-ribose 1-phosphate degradation; D-glyceraldehyde 3-phosphate and acetaldehyde from 2-deoxy-alpha-D-ribose 1-phosphate: step 1/2. Isomerase that catalyzes the conversion of deoxy-ribose 1-phosphate (dRib-1-P) and ribose 1-phosphate (Rib-1-P) to deoxy-ribose 5-phosphate (dRib-5-P) and ribose 5-phosphate (Rib-5-P), respectively. This is Phosphopentomutase from Sodalis glossinidius (strain morsitans).